Consider the following 210-residue polypeptide: Protein GrpE (210 aa).

This sequence belongs to the GrpE family. Homodimer.

Its subcellular location is the cytoplasm. Participates actively in the response to hyperosmotic and heat shock by preventing the aggregation of stress-denatured proteins, in association with DnaK and GrpE. It is the nucleotide exchange factor for DnaK and may function as a thermosensor. Unfolded proteins bind initially to DnaJ; upon interaction with the DnaJ-bound protein, DnaK hydrolyzes its bound ATP, resulting in the formation of a stable complex. GrpE releases ADP from DnaK; ATP binding to DnaK triggers the release of the substrate protein, thus completing the reaction cycle. Several rounds of ATP-dependent interactions between DnaJ, DnaK and GrpE are required for fully efficient folding. The sequence is that of Protein GrpE from Rhizobium leguminosarum bv. trifolii (strain WSM2304).